The chain runs to 172 residues: Ribosome maturation factor RimP (172 aa).

This sequence belongs to the RimP family.

The protein resides in the cytoplasm. In terms of biological role, required for maturation of 30S ribosomal subunits. In Nitratidesulfovibrio vulgaris (strain ATCC 29579 / DSM 644 / CCUG 34227 / NCIMB 8303 / VKM B-1760 / Hildenborough) (Desulfovibrio vulgaris), this protein is Ribosome maturation factor RimP.